A 545-amino-acid chain; its full sequence is Membrane protein insertase YidC (545 aa).

Residues 8–28 (ILLATVLSVGILILWQVIFPK) form a helical membrane-spanning segment. Residues 31–69 (PPKPAPTPAAEVAKPAAPAAPAPGAAAPAVPAPPPDAPE) are disordered. A compositionally biased stretch (low complexity) spans 38–59 (PAAEVAKPAAPAAPAPGAAAPA). The next 5 helical transmembrane spans lie at 325–345 (IDYGAVAKFFALFARGLLYVM), 355–375 (WGVAIILLTVLVRLVLFPLTY), 421–441 (LGGCLPMLLQMPVWFALYAAL), 458–478 (LTAHDPYFILPIAMGISSFVM), and 497–517 (FFPGFFTVIMLFVPGGLTLYI).

It belongs to the OXA1/ALB3/YidC family. Type 1 subfamily. Interacts with the Sec translocase complex via SecD. Specifically interacts with transmembrane segments of nascent integral membrane proteins during membrane integration.

The protein resides in the cell inner membrane. Functionally, required for the insertion and/or proper folding and/or complex formation of integral membrane proteins into the membrane. Involved in integration of membrane proteins that insert both dependently and independently of the Sec translocase complex, as well as at least some lipoproteins. Aids folding of multispanning membrane proteins. The sequence is that of Membrane protein insertase YidC from Anaeromyxobacter dehalogenans (strain 2CP-C).